The chain runs to 343 residues: Protein-glutamate methylesterase/protein-glutamine glutaminase 2 (343 aa).

The 118-residue stretch at 5-122 (KVLVVDDSAI…SVGDMSGQLV (118 aa)) folds into the Response regulatory domain. At D56 the chain carries 4-aspartylphosphate. The region spanning 154-343 (AETSNKVIAI…SIADEIVRMV (190 aa)) is the CheB-type methylesterase domain. Residues S166, H192, and D288 contribute to the active site.

It belongs to the CheB family. In terms of processing, phosphorylated by CheA. Phosphorylation of the N-terminal regulatory domain activates the methylesterase activity.

The protein localises to the cytoplasm. It carries out the reaction [protein]-L-glutamate 5-O-methyl ester + H2O = L-glutamyl-[protein] + methanol + H(+). The catalysed reaction is L-glutaminyl-[protein] + H2O = L-glutamyl-[protein] + NH4(+). Its function is as follows. Involved in chemotaxis. Part of a chemotaxis signal transduction system that modulates chemotaxis in response to various stimuli. Catalyzes the demethylation of specific methylglutamate residues introduced into the chemoreceptors (methyl-accepting chemotaxis proteins or MCP) by CheR. Also mediates the irreversible deamidation of specific glutamine residues to glutamic acid. This is Protein-glutamate methylesterase/protein-glutamine glutaminase 2 from Syntrophus aciditrophicus (strain SB).